Here is a 578-residue protein sequence, read N- to C-terminus: Longifolene synthase (578 aa).

Residues aspartate 331, aspartate 335, and aspartate 475 each coordinate Mg(2+). The DDXXD motif motif lies at 331–335 (DDLYD).

The protein belongs to the terpene synthase family. Tpsd subfamily. It depends on Mg(2+) as a cofactor. Mn(2+) is required as a cofactor.

The catalysed reaction is (2E,6E)-farnesyl diphosphate = longifolene + diphosphate. Its pathway is sesquiterpene biosynthesis. The protein operates within terpene metabolism; oleoresin biosynthesis. Terpene synthase (TPS) involved in the biosynthesis of sesquiterpene natural products included in conifer oleoresin secretions and volatile emissions; these compounds contribute to biotic and abiotic stress defense against herbivores and pathogens. Catalyzes the conversion of (2E,6E)-farnesyl diphosphate (FPP) to longifolene. This chain is Longifolene synthase, found in Picea engelmannii x Picea glauca (Hybrid white spruce).